Here is a 191-residue protein sequence, read N- to C-terminus: Transcription factor HES-2 (191 aa).

Residues 1–26 (MAPNVALADSMHNYQPKPGKRNQEAS) form a disordered region. Positions 28–85 (LRKTLKPLMEKRRRARINESLNQLKTLILPLIGKDNSRYSKLEKADILEMTVRFLRDI) constitute a bHLH domain. In terms of domain architecture, Orange spans 97–130 (YKEGYRACVERLSAILGKSHVLTGEASNRLLEYL). Composition is skewed to polar residues over residues 159–173 (RTSQ…QPSS) and 182–191 (QLNSSIWRPW). The disordered stretch occupies residues 159–191 (RTSQFGSPLQNQPSSHRPAPCPPQLNSSIWRPW). Positions 188-191 (WRPW) match the WRPW motif motif.

As to quaternary structure, transcription repression requires formation of a complex with a corepressor protein of the Groucho/TLE family. Homodimer, and heterodimer with the other bHLH proteins neurod1, neurod4/ath3, hes1/hairy1 and hes6r. Weakly interacts with the bHLH protein hey1/hrt1. Expressed in the animal half of the early cleavage stage embryo. During neurulation and organogenesis, the otic vesicles and retina are the main sites of expression; expression in otic placodes begins as early as stage 13.5, persisting in the otic vesicles at stage 30 and beyond. Also transiently expressed in the olfactory placodes. In addition, weakly expressed in primary neurons. Expression in the retina begins at stage 21, and is seen throughout the neural retina by stage 30. From stage 35 onwards, expression progressively declines in the central retina, while remaining high in the margins. At stage 41, expression becomes restricted to the ciliary marginal zone (CMZ) of the retina, the only region where retinogenesis is still occurring.

Its subcellular location is the nucleus. Transcriptional repressor. Essential in the retina to govern glial versus neuronal differentiation. Promotes gliogenesis through the inhibition of neuronal differentiation by at least two distinct mechanisms; represses proneural gene transcription, and also physically interacts with proneural proteins, including neurod1. The protein is Transcription factor HES-2 (hes2) of Xenopus laevis (African clawed frog).